The sequence spans 156 residues: Small ribosomal subunit protein bS18c (156 aa).

The interval Met1–Arg54 is disordered. The span at Gln13 to Arg48 shows a compositional bias: basic residues.

Belongs to the bacterial ribosomal protein bS18 family. In terms of assembly, part of the 30S ribosomal subunit.

It is found in the plastid. The protein localises to the chloroplast. This chain is Small ribosomal subunit protein bS18c, found in Lolium perenne (Perennial ryegrass).